The chain runs to 586 residues: Laccase-9 (586 aa).

An N-terminal signal peptide occupies residues 1–25 (MPRVHHSLSNQAFLVLLLFSSIASA). Plastocyanin-like domains are found at residues 33–149 (HVKD…PRSG) and 159–307 (KEVP…YEGA). N-linked (GlcNAc...) asparagine glycans are attached at residues Asn-52, Asn-74, and Asn-79. Positions 83 and 85 each coordinate Cu cation. A glycan (N-linked (GlcNAc...) asparagine) is linked at Asn-111. The Cu cation site is built by His-128 and His-130. N-linked (GlcNAc...) asparagine glycosylation is found at Asn-236, Asn-333, Asn-385, Asn-403, and Asn-451. The Plastocyanin-like 3 domain occupies 411 to 552 (DFPDQPPLKF…MMAFIVQNGP (142 aa)). 7 residues coordinate Cu cation: His-469, His-472, His-474, His-531, Cys-532, His-533, and His-537.

This sequence belongs to the multicopper oxidase family. Requires Cu cation as cofactor. As to expression, predominantly expressed in roots.

The protein resides in the secreted. The protein localises to the extracellular space. It is found in the apoplast. The catalysed reaction is 4 hydroquinone + O2 = 4 benzosemiquinone + 2 H2O. Its function is as follows. Lignin degradation and detoxification of lignin-derived products. This Arabidopsis thaliana (Mouse-ear cress) protein is Laccase-9 (LAC9).